We begin with the raw amino-acid sequence, 360 residues long: Protein Wnt-2 (360 aa).

Positions 1–25 (MNAPLGGIWLWLPLLLTWLTPEVSS) are cleaved as a signal peptide. Cystine bridges form between C76–C87, C127–C135, C137–C157, C206–C220, C208–C215, C278–C309, C294–C304, C308–C348, C324–C339, C326–C336, and C331–C332. The O-palmitoleoyl serine; by PORCN moiety is linked to residue S212. N295 carries an N-linked (GlcNAc...) asparagine glycan.

This sequence belongs to the Wnt family. Post-translationally, palmitoleoylation is required for efficient binding to frizzled receptors. Depalmitoleoylation leads to Wnt signaling pathway inhibition.

The protein resides in the secreted. Its subcellular location is the extracellular space. The protein localises to the extracellular matrix. In terms of biological role, ligand for members of the frizzled family of seven transmembrane receptors. Functions in the canonical Wnt signaling pathway that results in activation of transcription factors of the TCF/LEF family. The chain is Protein Wnt-2 (WNT2) from Dasypus novemcinctus (Nine-banded armadillo).